A 248-amino-acid chain; its full sequence is Myelin protein P0 (248 aa).

Residues 1–29 form the signal peptide; sequence MAPGAPSSSPSPILAALLFSSLVLSPALA. The Ig-like V-type domain occupies 30–143; that stretch reads IVVYTDREIY…DIVGKTSQVT (114 aa). Topologically, residues 30-153 are extracellular; that stretch reads IVVYTDREIY…LYVFEKVPTR (124 aa). The cysteines at positions 50 and 127 are disulfide-linked. The N-linked (GlcNAc...) (complex) asparagine glycan is linked to Asn122. The chain crosses the membrane as a helical span at residues 154-179; that stretch reads YGVVLGAVIGGILGVVLLLLLLFYLI. Over 180 to 248 the chain is Cytoplasmic; it reads RYCWLRRQAA…GLGESRKDKK (69 aa). A Phosphoserine; by PKC modification is found at Ser210. The interval 222 to 248 is disordered; that stretch reads MLDHSRSTKAASEKKSKGLGESRKDKK. The segment covering 224-248 has biased composition (basic and acidic residues); that stretch reads DHSRSTKAASEKKSKGLGESRKDKK. Residues Ser226 and Ser228 each carry the phosphoserine modification. Phosphoserine; by PKC is present on Ser233. Residues Ser237 and Ser243 each carry the phosphoserine modification.

This sequence belongs to the myelin P0 protein family. In terms of assembly, homodimer and homotetramer. In terms of processing, N-glycosylated; contains sulfate-substituted glycan. Found only in peripheral nervous system Schwann cells.

It is found in the cell membrane. In terms of biological role, is an adhesion molecule necessary for normal myelination in the peripheral nervous system. It mediates adhesion between adjacent myelin wraps and ultimately drives myelin compaction. In Mus musculus (Mouse), this protein is Myelin protein P0 (Mpz).